The primary structure comprises 195 residues: Interferon omega-1 (195 aa).

An N-terminal signal peptide occupies residues 1–23; that stretch reads MAFVLSLLMALVLVSYGPGGSLG. Cystine bridges form between C24/C122 and C52/C162.

The protein belongs to the alpha/beta interferon family.

The protein localises to the secreted. This chain is Interferon omega-1 (IFNW1), found in Bos taurus (Bovine).